A 90-amino-acid polypeptide reads, in one-letter code: MKTAIFTVVLALAVFAVLSFGWEANEKALSEEFTELIHEKGAASETEARECRYFWGECHDHMPCCDWLVCRYKWPITYNICVWNRTFPEK.

Residues Met-1 to Ser-19 form the signal peptide. The propeptide occupies Phe-20–Glu-50. Disulfide bonds link Cys-51–Cys-65, Cys-58–Cys-70, and Cys-64–Cys-81.

It belongs to the neurotoxin 10 (Hwtx-1) family. 13 (Hntx-13) subfamily. As to expression, expressed by the venom gland.

Its subcellular location is the secreted. In terms of biological role, ion channel inhibitor. The chain is U7-theraphotoxin-Hhn1a 8 from Cyriopagopus hainanus (Chinese bird spider).